A 314-amino-acid chain; its full sequence is tRNA dimethylallyltransferase (314 aa).

ATP is bound at residue 8–15; it reads GPTGAGKS. Substrate is bound at residue 10–15; the sequence is TGAGKS.

The protein belongs to the IPP transferase family. As to quaternary structure, monomer. Requires Mg(2+) as cofactor.

It carries out the reaction adenosine(37) in tRNA + dimethylallyl diphosphate = N(6)-dimethylallyladenosine(37) in tRNA + diphosphate. In terms of biological role, catalyzes the transfer of a dimethylallyl group onto the adenine at position 37 in tRNAs that read codons beginning with uridine, leading to the formation of N6-(dimethylallyl)adenosine (i(6)A). This Mycobacterium tuberculosis (strain ATCC 25177 / H37Ra) protein is tRNA dimethylallyltransferase.